A 325-amino-acid polypeptide reads, in one-letter code: Anthranilate phosphoribosyltransferase (325 aa).

5-phospho-alpha-D-ribose 1-diphosphate is bound by residues Gly-74, 77–78, Thr-82, 84–87, 101–109, and Ser-113; these read GD, NVST, and KHGNVSITS. Gly-74 serves as a coordination point for anthranilate. Ser-86 serves as a coordination point for Mg(2+). Asn-104 serves as a coordination point for anthranilate. Arg-159 is a binding site for anthranilate. Asp-217 and Glu-218 together coordinate Mg(2+).

Belongs to the anthranilate phosphoribosyltransferase family. As to quaternary structure, homodimer. It depends on Mg(2+) as a cofactor.

It carries out the reaction N-(5-phospho-beta-D-ribosyl)anthranilate + diphosphate = 5-phospho-alpha-D-ribose 1-diphosphate + anthranilate. The protein operates within amino-acid biosynthesis; L-tryptophan biosynthesis; L-tryptophan from chorismate: step 2/5. Catalyzes the transfer of the phosphoribosyl group of 5-phosphorylribose-1-pyrophosphate (PRPP) to anthranilate to yield N-(5'-phosphoribosyl)-anthranilate (PRA). The sequence is that of Anthranilate phosphoribosyltransferase from Thermococcus kodakarensis (strain ATCC BAA-918 / JCM 12380 / KOD1) (Pyrococcus kodakaraensis (strain KOD1)).